Here is a 315-residue protein sequence, read N- to C-terminus: Triosephosphate isomerase, chloroplastic (315 aa).

The transit peptide at Met1 to Met60 directs the protein to the chloroplast. Substrate contacts are provided by Asn71 and Lys73. His155 serves as the catalytic Electrophile. Residue Ser178 is modified to Phosphoserine. Residue Glu225 is the Proton acceptor of the active site.

The protein belongs to the triosephosphate isomerase family. As to quaternary structure, homodimer.

It is found in the plastid. The protein localises to the chloroplast. It carries out the reaction D-glyceraldehyde 3-phosphate = dihydroxyacetone phosphate. Its pathway is carbohydrate biosynthesis; Calvin cycle. The polypeptide is Triosephosphate isomerase, chloroplastic (TIM) (Arabidopsis thaliana (Mouse-ear cress)).